Reading from the N-terminus, the 339-residue chain is 4-hydroxy-2-oxovalerate aldolase (339 aa).

A Pyruvate carboxyltransferase domain is found at 7–257 (IRIMDTTLRD…QVGVDLYKIM (251 aa)). 15–16 (RD) provides a ligand contact to substrate. Aspartate 16 lines the Mn(2+) pocket. Catalysis depends on histidine 19, which acts as the Proton acceptor. Residues serine 169 and histidine 196 each coordinate substrate. Mn(2+)-binding residues include histidine 196 and histidine 198. Tyrosine 286 is a substrate binding site.

Belongs to the 4-hydroxy-2-oxovalerate aldolase family.

It catalyses the reaction (S)-4-hydroxy-2-oxopentanoate = acetaldehyde + pyruvate. This is 4-hydroxy-2-oxovalerate aldolase from Pelotomaculum thermopropionicum (strain DSM 13744 / JCM 10971 / SI).